The sequence spans 64 residues: Large ribosomal subunit protein eL37 (64 aa).

Residues Cys-20, Cys-23, Cys-35, and Cys-38 each coordinate Zn(2+). Residues 20-38 (CRRCGRRAFHVRKKVCAAC) form a C4-type zinc finger.

This sequence belongs to the eukaryotic ribosomal protein eL37 family. The cofactor is Zn(2+).

Its function is as follows. Binds to the 23S rRNA. This chain is Large ribosomal subunit protein eL37, found in Methanococcus maripaludis (strain DSM 14266 / JCM 13030 / NBRC 101832 / S2 / LL).